Here is a 745-residue protein sequence, read N- to C-terminus: Probable xanthine dehydrogenase subunit D (745 aa).

Gln-204, Phe-235, and Ala-508 together coordinate Mo-molybdopterin.

Belongs to the xanthine dehydrogenase family. As to quaternary structure, could be composed of four subunits: PucA, PucC, PucD and PucE. Requires Mo-molybdopterin as cofactor.

The catalysed reaction is xanthine + NAD(+) + H2O = urate + NADH + H(+). The enzyme catalyses hypoxanthine + NAD(+) + H2O = xanthine + NADH + H(+). It participates in purine metabolism; hypoxanthine degradation; urate from hypoxanthine: step 1/2. Its pathway is purine metabolism; hypoxanthine degradation; urate from hypoxanthine: step 2/2. Its function is as follows. Oxidizes hypoxanthine and xanthine to uric acid. This is Probable xanthine dehydrogenase subunit D (pucD) from Bacillus subtilis (strain 168).